The chain runs to 661 residues: Acyl-coenzyme A oxidase acox-1.2 (661 aa).

Residues Tyr147–Thr150, Gly155–Ser156, and Gly189 each bind FAD. Residues Lys283–Tyr286 and Arg293 each bind substrate. FAD contacts are provided by residues Arg318 and Gln338 to Arg341. His340, Ser390, His394, and Gln402 together coordinate ATP. Residue Gly409 participates in FAD binding. A substrate-binding site is contributed by Tyr431–Glu432. The Proton acceptor role is filled by Glu432. Residue Glu434 participates in FAD binding. Residues Arg525–Arg528 and Tyr573 each bind ATP. A Microbody targeting signal motif is present at residues Ala659–Leu661.

It belongs to the acyl-CoA oxidase family. Homodimer. Forms a heterodimer with acox-1.1. The cofactor is FAD.

Its subcellular location is the peroxisome. It carries out the reaction asc-omegaC5-CoA + O2 = asc-omegaDeltaC5-CoA + H2O2. It participates in lipid metabolism; peroxisomal fatty acid beta-oxidation. With respect to regulation, activated by ATP. ATP binding leads to a conformational change that promotes FAD cofactor binding and enzyme activity. ATP binding likely occurs during acox-1.2 folding and/or dimer formation. The preference for processing substrates with shorter fatty acid chains is likely due to the closed conformation of the active site. In terms of biological role, involved in the first step of peroxisomal beta-oxidation by catalyzing the desaturation of fatty acid-derived side chains of ascaroside pheromones, which regulates development and behavior. Specifically, shortens ascarosides with 5-carbon omega side chain (asc-omega-C5). Does not shorten indol-3-carbonyl(IC)-ascaroside with 7-carbon or 9-carbon side chains. Does not catalyze the desaturation of fatty acids or hydroxylated fatty acids. This is Acyl-coenzyme A oxidase acox-1.2 from Caenorhabditis elegans.